Consider the following 144-residue polypeptide: L-fucose mutarotase (144 aa).

The active-site Proton donor is H22. Residues D30, R109, and Y131–N133 contribute to the substrate site.

Belongs to the RbsD / FucU family. FucU mutarotase subfamily. As to quaternary structure, homodecamer.

Its subcellular location is the cytoplasm. It carries out the reaction alpha-L-fucose = beta-L-fucose. Its pathway is carbohydrate metabolism; L-fucose metabolism. Functionally, involved in the anomeric conversion of L-fucose. The protein is L-fucose mutarotase of Haemophilus influenzae (strain 86-028NP).